A 312-amino-acid chain; its full sequence is Aspartoacylase (312 aa).

Zn(2+) contacts are provided by His20 and Glu23. Residues Arg62, Asn69, and Arg70 each contribute to the N-acetyl-L-aspartate site. Zn(2+) is bound at residue His115. The N-acetyl-L-aspartate site is built by Tyr163 and Arg167. Glu177 acts as the Proton donor/acceptor in catalysis. Residue Tyr287 participates in N-acetyl-L-aspartate binding.

Belongs to the AspA/AstE family. Aspartoacylase subfamily. In terms of assembly, homodimer. The cofactor is Zn(2+). In terms of tissue distribution, detected in kidney proximal tubule cells (at protein level).

The protein localises to the cytoplasm. Its subcellular location is the nucleus. The catalysed reaction is an N-acyl-L-aspartate + H2O = a carboxylate + L-aspartate. The enzyme catalyses N-acetyl-L-aspartate + H2O = L-aspartate + acetate. Its function is as follows. Catalyzes the deacetylation of N-acetylaspartic acid (NAA) to produce acetate and L-aspartate. NAA occurs in high concentration in brain and its hydrolysis NAA plays a significant part in the maintenance of intact white matter. In other tissues it acts as a scavenger of NAA from body fluids. This chain is Aspartoacylase, found in Rattus norvegicus (Rat).